We begin with the raw amino-acid sequence, 469 residues long: MKLLSEKATCNSHGQDSSYFLGWQEYEKNPYDEIQNPKGIIQMGLAENQLSFDLLESWLAQNPDAAGFKRNGESIFRELALFQDYHGLPAFKNAMTKFMSEIRGNRVSFDSNNLVLTAGATSANETLMFCLANQGDAFLLPTPYYPGFDRDLKWRTGAEIVPIHCSSSNGFRITESALEEAYLDAKKRNLKVKGVLVTNPSNPLGTTLNRNELELLLTFIDEKGIHLISDEIYSGTVFNSPGFVSVMEVLIEKNYMKTRVWERVHIVYSLSKDLGLPGFRIGAIYSNDEMVVSAATKMSSFGLVSSQTQYLLSCMLSDKKFTKKYISENQKRLKKRHAMLVKGLKSAGINCLESNAGLFCWVDMRHLLSSNNFDAEMDLWKKIVYDVGLNISPGSSCHCTEPGWFRVCFANMSEDTLDLAMRRIKDFVESTAPNATNHQNQQQSNANSKKKSFSKWVFRLSFNDRQRER.

Lys-272 is modified (N6-(pyridoxal phosphate)lysine). The disordered stretch occupies residues 432–452; sequence APNATNHQNQQQSNANSKKKS. Over residues 437 to 447 the composition is skewed to low complexity; it reads NHQNQQQSNAN.

This sequence belongs to the class-I pyridoxal-phosphate-dependent aminotransferase family. In terms of assembly, homodimer. It depends on pyridoxal 5'-phosphate as a cofactor.

The catalysed reaction is S-adenosyl-L-methionine = 1-aminocyclopropane-1-carboxylate + S-methyl-5'-thioadenosine + H(+). It participates in alkene biosynthesis; ethylene biosynthesis via S-adenosyl-L-methionine; ethylene from S-adenosyl-L-methionine: step 1/2. In terms of biological role, catalyzes the formation of 1-aminocyclopropane-1-carboxylate, a direct precursor of ethylene in higher plants. The sequence is that of 1-aminocyclopropane-1-carboxylate synthase 3 (ACS3) from Solanum lycopersicum (Tomato).